The following is a 463-amino-acid chain: Matrix remodeling-associated protein 8 (463 aa).

The N-terminal stretch at 1-19 is a signal peptide; that stretch reads MELRAWVLLWRLVLLQSSA. The Extracellular segment spans residues 20 to 362; the sequence is VLLSSGPSGP…PEGRAHFFQQ (343 aa). Ig-like V-type domains lie at 29–173 and 176–308; these read PATS…LEVT and PRAA…LRVT. Cystine bridges form between Cys-54/Cys-153 and Cys-202/Cys-288. Asn-135 is a glycosylation site (N-linked (GlcNAc...) asparagine). Ser-244 is subject to Phosphoserine. An RGD motif is present at residues 268–270; it reads RGD. The tract at residues 309-341 is disordered; it reads EPAARPPPPPRDSPGNGSSHSGAPGPGARDPTL. Residues 321-335 show a composition bias toward low complexity; that stretch reads SPGNGSSHSGAPGPG. Asn-324 carries an N-linked (GlcNAc...) asparagine glycan. Residues 363 to 383 traverse the membrane as a helical segment; that stretch reads LGYVLATLLLFILLLITVVLA. Over 384-463 the chain is Cytoplasmic; it reads TRQRRRGGYE…DKEFRKEYCK (80 aa).

As to quaternary structure, homodimer in cis. Does not appear to form trans-homodimers. Interacts with ITGB3; the interaction inhibits ITGAV:ITGB3 heterodimer formation.

It is found in the cell membrane. The protein localises to the cell junction. The protein resides in the tight junction. It localises to the cytoplasm. Its subcellular location is the cell projection. It is found in the cilium membrane. The protein localises to the nucleus. In terms of biological role, transmembrane protein which can modulate activity of various signaling pathways, probably via binding to integrin ITGAV:ITGB3. Mediates heterophilic cell-cell interactions in vitro. Inhibits osteoclastogenesis downstream of TNFSF11/RANKL and CSF1, where it may function by attenuating signaling via integrin ITGB3 and MAP kinase p38. Plays a role in cartilage formation where it promotes proliferation and maturation of growth plate chondrocytes. Stimulates formation of primary cilia in chondrocytes. Enhances expression of genes involved in the hedgehog signaling pathway in chondrocytes, including the hedgehog signaling molecule IHH; may also promote signaling via the PTHLH/PTHrP pathway. Plays a role in angiogenesis where it suppresses migration of endothelial cells and also promotes their apoptosis. Inhibits VEGF-induced activation of AKT and p38 MAP kinase in endothelial cells. Also inhibits VTN (vitronectin)-mediated integrin ITGAV:ITGB3 signaling and activation of PTK2/FAK. May play a role in the maturation and maintenance of the blood-brain barrier. The protein is Matrix remodeling-associated protein 8 (MXRA8) of Bos taurus (Bovine).